The sequence spans 215 residues: Thymidylate kinase (215 aa).

ATP is bound at residue 7-14; that stretch reads GMEGSGKS.

This sequence belongs to the thymidylate kinase family.

It catalyses the reaction dTMP + ATP = dTDP + ADP. Functionally, phosphorylation of dTMP to form dTDP in both de novo and salvage pathways of dTTP synthesis. This chain is Thymidylate kinase, found in Nitratidesulfovibrio vulgaris (strain DSM 19637 / Miyazaki F) (Desulfovibrio vulgaris).